The sequence spans 451 residues: Trigger factor (451 aa).

A PPIase FKBP-type domain is found at 171 to 256 (GDRVKVNFKG…ATAIEAPEDK (86 aa)).

It belongs to the FKBP-type PPIase family. Tig subfamily.

The protein resides in the cytoplasm. The catalysed reaction is [protein]-peptidylproline (omega=180) = [protein]-peptidylproline (omega=0). Functionally, involved in protein export. Acts as a chaperone by maintaining the newly synthesized protein in an open conformation. Functions as a peptidyl-prolyl cis-trans isomerase. This chain is Trigger factor, found in Bradyrhizobium sp. (strain ORS 278).